A 350-amino-acid polypeptide reads, in one-letter code: Probable poly-beta-1,6-N-acetyl-D-glucosamine export protein (350 aa).

A run of 10 helical transmembrane segments spans residues Glu7–Thr29, Phe44–Thr66, Thr79–Leu101, Leu116–Ile138, Leu145–Thr167, Ile187–Asn204, Phe211–Leu233, Ser243–Ile262, Met269–Ile291, and Thr306–Leu328.

It belongs to the acyltransferase 3 family.

The protein resides in the cell membrane. Its function is as follows. Presumably involved in the export of the biofilm adhesin polysaccharide poly-beta-1,6-N-acetyl-D-glucosamine (PNAG, also referred to as PIA) across the cell membrane. The protein is Probable poly-beta-1,6-N-acetyl-D-glucosamine export protein (icaC) of Staphylococcus aureus (strain MRSA252).